Consider the following 81-residue polypeptide: MKLTCVVIVAVLFLTAWTFVTAVPHSSNALENLYLKARHEMENPEASKLNTRYDCEPPGNFCGMIKIGPPCCSGWCFFACA.

The N-terminal stretch at 1-22 is a signal peptide; it reads MKLTCVVIVAVLFLTAWTFVTA. The propeptide occupies 23-52; it reads VPHSSNALENLYLKARHEMENPEASKLNTR. 3 disulfide bridges follow: Cys-55-Cys-72, Cys-62-Cys-76, and Cys-71-Cys-80. Pro-70 is modified (4-hydroxyproline; partial). Trp-75 is subject to 6'-bromotryptophan; partial.

This sequence belongs to the conotoxin O1 superfamily. Post-translationally, txO4 is found with and without hydroxyproline and these two forms have a bromotryptophan. Truncated TxO4 is found with and without bromotryptophan, and these two forms have no hydroxyproline. As to expression, expressed by the venom duct.

Its subcellular location is the secreted. Its function is as follows. Omega-conotoxins act at presynaptic membranes, they bind and block voltage-gated calcium channels (Cav). The chain is Omega-conotoxin-like TxO4 from Conus textile (Cloth-of-gold cone).